The chain runs to 108 residues: ATP synthase subunit H, mitochondrial (108 aa).

A mitochondrion-targeting transit peptide spans 1–19; that stretch reads MFTLRAASRRAFSTSIARR. Disordered stretches follow at residues 40–60 and 75–108; these read AKDA…KPPV and APVD…GVAV. Positions 47-60 are enriched in low complexity; the sequence is VKPWSAPSAPKPPV. Positions 81 to 92 are enriched in polar residues; sequence GQTNSKSASPQA. Acidic residues predominate over residues 93 to 108; it reads NDEDWLAFEEEEGVAV.

F-type ATP synthases have 2 components, the catalytic core F(1) and the membrane-embedded component F(0), linked together by a central stalk and a peripheral stalk. The central stalk, also called rotor shaft, is often seen as part of F(1). The peripheral stalk is seen as part of F(0). F(0) contains the membrane channel next to the rotor. F-type ATP synthases form dimers but each monomer functions independently in ATP generation. The dimer consists of 17 different polypeptides: ATP1 (subunit alpha, 3 molecules per monomer, part of F(1)), ATP2 (subunit beta, 3 copies per monomer, part of F(1)), ATP3 (subunit gamma, part of the central stalk), ATP4 (subunit b, part of the peripheral stalk), ATP5/OSCP (subunit 5/OSCP, part of the peripheral stalk), ATP6 (subunit a, part of the peripheral stalk), ATP7 (subunit d, part of the peripheral stalk), ATP8 (subunit 8, part of the peripheral stalk), OLI1 (subunit c, part of the rotor, 10 molecules per monomer), ATP14 (subunit H, part of the peripheral stalk), ATP15 (subunit epsilon, part of the central stalk), ATP16 (subunit delta, part of the central stalk), ATP17 (subunit f, part of the peripheral stalk), ATP18 (subunit i/j, part of the peripheral stalk), ATP19 (subunit k, dimer-specific, at interface between monomers), ATP20 (subunit g, at interface between monomers), TIM11 (subunit e, at interface between monomers).

The protein localises to the mitochondrion inner membrane. In terms of biological role, mitochondrial membrane ATP synthase (F(1)F(0) ATP synthase or Complex V) produces ATP from ADP in the presence of a proton gradient across the membrane which is generated by electron transport complexes of the respiratory chain. F-type ATP synthases consist of two structural domains, F(1) - containing the extramembraneous catalytic core, and F(0) - containing the membrane proton channel, linked together by a central stalk and a peripheral stalk. During catalysis, ATP synthesis in the catalytic domain of F(1) is coupled via a rotary mechanism of the central stalk subunits to proton translocation. Part of the peripheral stalk. The sequence is that of ATP synthase subunit H, mitochondrial from Yarrowia lipolytica (strain CLIB 122 / E 150) (Yeast).